The chain runs to 279 residues: Phycobilisome 34.5 kDa linker polypeptide, phycoerythrocyanin-associated, rod (279 aa).

Residues 2–178 (STSVAERLAI…LYRGRANSDN (177 aa)) form the PBS-linker domain. In terms of domain architecture, CpcD-like spans 226-278 (ARMFIVEAIAGTLNTNVAVRRSRQVYTVPYDRLSATYQEIHKRGGKIVKITPA).

It belongs to the phycobilisome linker protein family.

The protein resides in the cellular thylakoid membrane. In terms of biological role, rod linker protein, associated with phycoerythrocyanin. Linker polypeptides determine the state of aggregation and the location of the disk-shaped phycobiliprotein units within the phycobilisome and modulate their spectroscopic properties in order to mediate a directed and optimal energy transfer. The polypeptide is Phycobilisome 34.5 kDa linker polypeptide, phycoerythrocyanin-associated, rod (pecC) (Mastigocladus laminosus (Fischerella sp.)).